A 104-amino-acid polypeptide reads, in one-letter code: DNA-directed RNA polymerase subunit omega (104 aa).

This sequence belongs to the RNA polymerase subunit omega family. As to quaternary structure, the RNAP catalytic core consists of 2 alpha, 1 beta, 1 beta' and 1 omega subunit. When a sigma factor is associated with the core the holoenzyme is formed, which can initiate transcription.

It carries out the reaction RNA(n) + a ribonucleoside 5'-triphosphate = RNA(n+1) + diphosphate. Promotes RNA polymerase assembly. Latches the N- and C-terminal regions of the beta' subunit thereby facilitating its interaction with the beta and alpha subunits. The chain is DNA-directed RNA polymerase subunit omega from Streptococcus thermophilus (strain CNRZ 1066).